Reading from the N-terminus, the 391-residue chain is N-acetylaspartylglutamate synthase A (391 aa).

Residues 115 to 300 enclose the ATP-grasp domain; the sequence is FQELAGHGVP…VGGIIADYTM (186 aa). Residues Lys-154, 189–199, and Arg-215 contribute to the ATP site; that span reads QKYVKESHGKD. Positions 260, 273, and 275 each coordinate Mg(2+). Mn(2+)-binding residues include Asp-260, Glu-273, and Asn-275. Ser-319 is subject to Phosphoserine. A compositionally biased stretch (polar residues) spans 341-350; it reads TINSGSTSSE. Positions 341-379 are disordered; that stretch reads TINSGSTSSESEPELGEIRDSSASTMGAPPSMLPEPGYN.

This sequence belongs to the RimK family. Requires Mg(2+) as cofactor. Mn(2+) is required as a cofactor.

It is found in the cytoplasm. The catalysed reaction is N-acetyl-L-aspartate + L-glutamate + ATP = N-acetyl-L-aspartyl-L-glutamate + ADP + phosphate + H(+). It catalyses the reaction N-acetyl-L-aspartate + 2 L-glutamate + 2 ATP = N-acetyl-L-aspartyl-L-glutamyl-L-glutamate + 2 ADP + 2 phosphate + 2 H(+). Its function is as follows. Catalyzes the synthesis of N-acetyl-L-aspartyl-L-glutamate (NAAG) and N-acetyl-L-aspartyl-L-glutamyl-L-glutamate. This Homo sapiens (Human) protein is N-acetylaspartylglutamate synthase A (RIMKLA).